An 894-amino-acid polypeptide reads, in one-letter code: Low-affinity phosphate transporter PHO91 (894 aa).

The SPX domain occupies Met1–Asn256. 2 disordered regions span residues Gln124–Met160 and Arg293–Asn321. Over residues Arg132–Arg144 the composition is skewed to basic residues. The segment covering Thr151 to Met160 has biased composition (polar residues). Phosphoserine is present on residues Ser295, Ser311, and Ser312. 13 helical membrane-spanning segments follow: residues Leu430–Phe450, Thr474–Ile494, Phe511–Ala531, Phe557–Ala577, Ala602–Ser622, Phe642–Ile662, Phe682–Leu702, Ile706–Gly726, Phe738–Ser758, Pro777–Ser797, Thr799–Gly819, Leu824–Phe844, and Ser874–Phe894.

This sequence belongs to the CitM (TC 2.A.11) transporter family. In terms of processing, ubiquitinated by RSP5. RSP5-mediated ubiquitination initiates internalization and degradation by the endocytic pathway.

The protein localises to the vacuole membrane. Its function is as follows. Vacuolar phosphate transporter that probably exports phosphate from the vacuolar lumen to the cytosol. The protein is Low-affinity phosphate transporter PHO91 (PHO91) of Saccharomyces cerevisiae (strain ATCC 204508 / S288c) (Baker's yeast).